Reading from the N-terminus, the 188-residue chain is Ribosome-recycling factor (188 aa).

This sequence belongs to the RRF family.

The protein localises to the cytoplasm. Functionally, responsible for the release of ribosomes from messenger RNA at the termination of protein biosynthesis. May increase the efficiency of translation by recycling ribosomes from one round of translation to another. The polypeptide is Ribosome-recycling factor (Akkermansia muciniphila (strain ATCC BAA-835 / DSM 22959 / JCM 33894 / BCRC 81048 / CCUG 64013 / CIP 107961 / Muc)).